A 463-amino-acid polypeptide reads, in one-letter code: Asparagine--tRNA ligase (463 aa).

Belongs to the class-II aminoacyl-tRNA synthetase family. Homodimer.

It is found in the cytoplasm. It catalyses the reaction tRNA(Asn) + L-asparagine + ATP = L-asparaginyl-tRNA(Asn) + AMP + diphosphate + H(+). In Alkaliphilus metalliredigens (strain QYMF), this protein is Asparagine--tRNA ligase.